A 410-amino-acid polypeptide reads, in one-letter code: MIQALRGMNDMMDDEAKLYKKIIDVCEDTAKKYGYEYIEIPKLEETALFKRSVGESSDIVGKEMYQFTDKSGNDVCLRPEGTAGVVRAFIEHKMDRAGGVKKYFYHGSMFRYERPQKGRLREFHQFGIECFSEGSVYEDASVILMLSEILKKLDIEATLKINSLGDGDCMPKYREKLLKFLKENENELCSDCKRRISTNPIRVLDCKVEHCQKILQNAPLITENLNEICAGEFSKLQEILTANGVTFEVDPKLVRGLDYYTKTAFEFVSGEIGSQSAVGGGGRYDNLVAFLGGRPTFGVGFALGIERFMEILSSKESKQKRVGIYICALDKKYIDKIFKIGIDLRRNFKVEISYEAKNLQKHLKNADNKNAEIFLCMGENEAKNDELFMKNLIAKTNKNIKIAEILKEIR.

This sequence belongs to the class-II aminoacyl-tRNA synthetase family. In terms of assembly, homodimer.

The protein resides in the cytoplasm. The catalysed reaction is tRNA(His) + L-histidine + ATP = L-histidyl-tRNA(His) + AMP + diphosphate + H(+). In Campylobacter hominis (strain ATCC BAA-381 / DSM 21671 / CCUG 45161 / LMG 19568 / NCTC 13146 / CH001A), this protein is Histidine--tRNA ligase.